Reading from the N-terminus, the 172-residue chain is Trypsin inhibitor 1B (172 aa).

2 cysteine pairs are disulfide-bonded: Cys40–Cys84 and Cys133–Cys139.

The protein belongs to the protease inhibitor I3 (leguminous Kunitz-type inhibitor) family.

Its function is as follows. WTI-1B inhibits trypsin stoichiometrically. This chain is Trypsin inhibitor 1B, found in Psophocarpus tetragonolobus (Winged bean).